Here is a 613-residue protein sequence, read N- to C-terminus: Ribosome-associated molecular chaperone SSB1 (613 aa).

Residue Ala2 is modified to N-acetylalanine. The nucleotide binding domain (NBD) stretch occupies residues 2 to 391; that stretch reads AEGVFQGAIG…ILTGQSTSDE (390 aa). 16–18 contacts ATP; it reads TTY. Position 47 is a phosphothreonine (Thr47). ATP-binding positions include Lys73, 205-207, 271-278, and Gly342; these read GGT and ERAKRTLS. Residues 392–402 are inter-domain linker; the sequence is TKDLLLLDVAP. A substrate binding domain (SBD) region spans residues 403 to 613; the sequence is LSLGVGMQGD…RVVTKAMSSR (211 aa). A Contributes to ribosome binding motif is present at residues 428-430; that stretch reads KRR. Thr431 is modified (phosphothreonine). The interval 516–612 is lid domain (SBDalpha); sequence SEEIEKMVNQ…KRVVTKAMSS (97 aa). Positions 574–582 match the Nuclear export signal motif; that stretch reads IEAALSDAL. Residues 601–613 form a required for interaction with ribosomes region; the sequence is GLKRVVTKAMSSR.

Belongs to the heat shock protein 70 family. Ssb-type Hsp70 subfamily. As to quaternary structure, binds to ribosomes. Binds close to the ribosomal tunnel exit via contacts with both ribosomal proteins RPL35, RPL39 and RPL19, and rRNA. Directly interacts with nascent polypeptides. This interaction is dependent on the ribosome-associated complex (RAC). Interacts with SSE1. Interacts with FES1. Interacts with NAP1.

It localises to the cytoplasm. It carries out the reaction ATP + H2O = ADP + phosphate + H(+). Its function is as follows. Ribosome-bound, Hsp70-type chaperone that assists in the cotranslational folding of newly synthesized proteins in the cytosol. Stimulates folding by interacting with nascent chains, binding to short, largely hydrophobic sequences exposed by unfolded proteins, thereby stabilizing longer, more slowly translated, and aggregation-prone nascent polypeptides and domains that cannot fold stably until fully synthesized. The Hsp70-protein substrate interaction depends on ATP-binding and on allosteric regulation between the NBD and the SBD. The ATP-bound state is characterized by a fast exchange rate of substrate (low affinity state), while in the ADP-bound state exchange is much slower (high affinity state). During the Hsp70 cycle, the chaperone switches between the ATP-bound state (open conformation) and the ADP-bound state (closed conformation) by major conformational rearrangements involving mainly the lid domain. Ssb cooperates with a specific Hsp40/Hsp70 co-chaperone termed the ribosome-associated complex (RAC), which stimulates the ATPase activity of the ribosome-associated pool of Ssbs and switches it to the high affinity substrate binding state. Hsp110 chaperone SSE1 and FES1 act as nucleotide exchange factors that cause substrate release. This Saccharomyces cerevisiae (strain ATCC 204508 / S288c) (Baker's yeast) protein is Ribosome-associated molecular chaperone SSB1.